Reading from the N-terminus, the 190-residue chain is Large ribosomal subunit protein bL25 (190 aa).

Belongs to the bacterial ribosomal protein bL25 family. CTC subfamily. As to quaternary structure, part of the 50S ribosomal subunit; part of the 5S rRNA/L5/L18/L25 subcomplex. Contacts the 5S rRNA. Binds to the 5S rRNA independently of L5 and L18.

This is one of the proteins that binds to the 5S RNA in the ribosome where it forms part of the central protuberance. In Neisseria meningitidis serogroup C / serotype 2a (strain ATCC 700532 / DSM 15464 / FAM18), this protein is Large ribosomal subunit protein bL25.